The sequence spans 322 residues: Acetyl-coenzyme A carboxylase carboxyl transferase subunit alpha (322 aa).

One can recognise a CoA carboxyltransferase C-terminal domain in the interval 43–297 (ALKSKSNALT…KEVLTQQLNK (255 aa)).

Belongs to the AccA family. As to quaternary structure, acetyl-CoA carboxylase is a heterohexamer composed of biotin carboxyl carrier protein (AccB), biotin carboxylase (AccC) and two subunits each of ACCase subunit alpha (AccA) and ACCase subunit beta (AccD).

The protein resides in the cytoplasm. It carries out the reaction N(6)-carboxybiotinyl-L-lysyl-[protein] + acetyl-CoA = N(6)-biotinyl-L-lysyl-[protein] + malonyl-CoA. It functions in the pathway lipid metabolism; malonyl-CoA biosynthesis; malonyl-CoA from acetyl-CoA: step 1/1. In terms of biological role, component of the acetyl coenzyme A carboxylase (ACC) complex. First, biotin carboxylase catalyzes the carboxylation of biotin on its carrier protein (BCCP) and then the CO(2) group is transferred by the carboxyltransferase to acetyl-CoA to form malonyl-CoA. The polypeptide is Acetyl-coenzyme A carboxylase carboxyl transferase subunit alpha (Vesicomyosocius okutanii subsp. Calyptogena okutanii (strain HA)).